Here is a 248-residue protein sequence, read N- to C-terminus: NAD(P)H-quinone oxidoreductase subunit K 1 (248 aa).

Residues 1–2 (MS) constitute a propeptide that is removed on maturation. [4Fe-4S] cluster is bound by residues Cys62, Cys63, Cys127, and Cys158. The disordered stretch occupies residues 228–248 (MGMPVPPALTTSQQKEQLNRG). The segment covering 236 to 248 (LTTSQQKEQLNRG) has biased composition (polar residues).

The protein belongs to the complex I 20 kDa subunit family. In terms of assembly, NDH-1 can be composed of about 15 different subunits; different subcomplexes with different compositions have been identified which probably have different functions. The cofactor is [4Fe-4S] cluster.

Its subcellular location is the cellular thylakoid membrane. It catalyses the reaction a plastoquinone + NADH + (n+1) H(+)(in) = a plastoquinol + NAD(+) + n H(+)(out). The catalysed reaction is a plastoquinone + NADPH + (n+1) H(+)(in) = a plastoquinol + NADP(+) + n H(+)(out). Functionally, NDH-1 shuttles electrons from an unknown electron donor, via FMN and iron-sulfur (Fe-S) centers, to quinones in the respiratory and/or the photosynthetic chain. The immediate electron acceptor for the enzyme in this species is believed to be plastoquinone. Couples the redox reaction to proton translocation, and thus conserves the redox energy in a proton gradient. Cyanobacterial NDH-1 also plays a role in inorganic carbon-concentration. The chain is NAD(P)H-quinone oxidoreductase subunit K 1 from Synechocystis sp. (strain ATCC 27184 / PCC 6803 / Kazusa).